Reading from the N-terminus, the 132-residue chain is Fatty acid-binding protein, adipocyte (132 aa).

At C2 the chain carries N-acetylcysteine. S13 carries the post-translational modification Phosphoserine. Y20 carries the phosphotyrosine; by Tyr-kinases modification. Residues 22–32 (KEVGVGFATRK) carry the Nuclear localization signal motif. 127–129 (RVY) contacts a fatty acid.

The protein belongs to the calycin superfamily. Fatty-acid binding protein (FABP) family. Monomer. Homodimer. Interacts with PPARG.

The protein localises to the cytoplasm. Its subcellular location is the nucleus. Its function is as follows. Lipid transport protein in adipocytes. Binds both long chain fatty acids and retinoic acid. Delivers long-chain fatty acids and retinoic acid to their cognate receptors in the nucleus. In Rattus norvegicus (Rat), this protein is Fatty acid-binding protein, adipocyte (Fabp4).